A 173-amino-acid chain; its full sequence is Small ribosomal subunit protein uS5 (173 aa).

The 64-residue stretch at 17-80 (LREKMIAVNR…EEARRNMVKV (64 aa)) folds into the S5 DRBM domain.

It belongs to the universal ribosomal protein uS5 family. As to quaternary structure, part of the 30S ribosomal subunit. Contacts proteins S4 and S8.

With S4 and S12 plays an important role in translational accuracy. Its function is as follows. Located at the back of the 30S subunit body where it stabilizes the conformation of the head with respect to the body. The polypeptide is Small ribosomal subunit protein uS5 (Acidovorax sp. (strain JS42)).